Consider the following 315-residue polypeptide: Ribosomal RNA small subunit methyltransferase H (315 aa).

Residues 33–35 (AGH), D53, F80, D101, and Q108 each bind S-adenosyl-L-methionine.

The protein belongs to the methyltransferase superfamily. RsmH family.

It localises to the cytoplasm. It catalyses the reaction cytidine(1402) in 16S rRNA + S-adenosyl-L-methionine = N(4)-methylcytidine(1402) in 16S rRNA + S-adenosyl-L-homocysteine + H(+). Specifically methylates the N4 position of cytidine in position 1402 (C1402) of 16S rRNA. The protein is Ribosomal RNA small subunit methyltransferase H of Natranaerobius thermophilus (strain ATCC BAA-1301 / DSM 18059 / JW/NM-WN-LF).